The primary structure comprises 789 residues: Cadherin-10 (789 aa).

The first 22 residues, 1 to 22 (MTIQQVLLLLLLWMWLLHPCRT), serve as a signal peptide directing secretion. Positions 23–54 (EMLFRRTPDLRPKGFVGRTSGSDGKALHRQKR) are excised as a propeptide. Cadherin domains lie at 55–160 (GWMW…EPTF), 161–269 (PEEI…PPRF), 270–384 (PQST…PPVF), 385–487 (SRSS…DNAP), and 488–606 (QFAV…LLLP). The Extracellular portion of the chain corresponds to 55 to 606 (GWMWNQFFLL…SCNAEALLLP (552 aa)). N-linked (GlcNAc...) asparagine glycosylation is present at Asn-256. Asn-438, Asn-456, and Asn-534 each carry an N-linked (GlcNAc...) asparagine glycan. A helical membrane pass occupies residues 607–634 (AGLSTGALIAILLCIIILLVIVVLFAAL). Topologically, residues 635 to 789 (KRQRKKEPLI…GGGESDKDAS (155 aa)) are cytoplasmic.

It localises to the cell membrane. In terms of biological role, cadherins are calcium-dependent cell adhesion proteins. They preferentially interact with themselves in a homophilic manner in connecting cells; cadherins may thus contribute to the sorting of heterogeneous cell types. This chain is Cadherin-10 (CDH10), found in Gallus gallus (Chicken).